A 159-amino-acid chain; its full sequence is SsrA-binding protein (159 aa).

The protein belongs to the SmpB family.

Its subcellular location is the cytoplasm. Functionally, required for rescue of stalled ribosomes mediated by trans-translation. Binds to transfer-messenger RNA (tmRNA), required for stable association of tmRNA with ribosomes. tmRNA and SmpB together mimic tRNA shape, replacing the anticodon stem-loop with SmpB. tmRNA is encoded by the ssrA gene; the 2 termini fold to resemble tRNA(Ala) and it encodes a 'tag peptide', a short internal open reading frame. During trans-translation Ala-aminoacylated tmRNA acts like a tRNA, entering the A-site of stalled ribosomes, displacing the stalled mRNA. The ribosome then switches to translate the ORF on the tmRNA; the nascent peptide is terminated with the 'tag peptide' encoded by the tmRNA and targeted for degradation. The ribosome is freed to recommence translation, which seems to be the essential function of trans-translation. This Acidiphilium cryptum (strain JF-5) protein is SsrA-binding protein.